We begin with the raw amino-acid sequence, 571 residues long: Hemagglutinin-neuraminidase (571 aa).

The Intravirion portion of the chain corresponds to 1–25; it reads MEDYSNLSLKSIPKRTCRIIFRTAT. A helical transmembrane segment spans residues 26–46; that stretch reads ILGICTLIVLCSSILHEIIHL. Over 47 to 571 the chain is Virion surface; the sequence is DVSSGLMDSD…IIPFLRELIP (525 aa). 3 disulfides stabilise this stretch: C166-C190, C180-C241, and C232-C245. Positions 228–233 are involved in neuraminidase activity; it reads NRKSCS. N-linked (GlcNAc...) asparagine; by host glycans are attached at residues N272, N284, and N335. Disulfide bonds link C338–C459, C370–C380, and C453–C463. Residues N386, N454, N498, N501, N517, and N522 are each glycosylated (N-linked (GlcNAc...) asparagine; by host). C535 and C546 are joined by a disulfide.

Belongs to the paramyxoviruses hemagglutinin-neuraminidase family. Homotetramer; composed of disulfide-linked homodimers. Interacts with F protein trimer.

Its subcellular location is the virion membrane. The protein resides in the host cell membrane. It carries out the reaction Hydrolysis of alpha-(2-&gt;3)-, alpha-(2-&gt;6)-, alpha-(2-&gt;8)- glycosidic linkages of terminal sialic acid residues in oligosaccharides, glycoproteins, glycolipids, colominic acid and synthetic substrates.. In terms of biological role, attaches the virus to sialic acid-containing cell receptors and thereby initiating infection. Binding of HN protein to the receptor induces a conformational change that allows the F protein to trigger virion/cell membranes fusion. Functionally, neuraminidase activity ensures the efficient spread of the virus by dissociating the mature virions from the neuraminic acid containing glycoproteins. The protein is Hemagglutinin-neuraminidase (HN) of Homo sapiens (Human).